We begin with the raw amino-acid sequence, 480 residues long: 3,6-anhydro-alpha-L-galactose dehydrogenase (480 aa).

NADP(+) contacts are provided by residues 149-150 (WN), 173-176 (KPTS), and 226-227 (GS). The active-site Proton acceptor is the glutamate 248. Leucine 249 contacts NADP(+). Cysteine 282 functions as the Nucleophile in the catalytic mechanism. Glutamate 383 is an NADP(+) binding site.

This sequence belongs to the aldehyde dehydrogenase family.

It catalyses the reaction 3,6-anhydro-alpha-L-galactopyranose + NADP(+) + H2O = 3,6-anhydro-L-galactonate + NADPH + 2 H(+). The enzyme catalyses 3,6-anhydro-alpha-L-galactopyranose + NAD(+) + H2O = 3,6-anhydro-L-galactonate + NADH + 2 H(+). Functionally, involved in the degradation of 3,6-anhydro-L-galactose, which is the major monomeric sugar of red macroalgae. Catalyzes the oxidation of 3,6-anhydro-L-galactose (AHG) to form 3,6-anhydrogalactonate (AHGA). The sequence is that of 3,6-anhydro-alpha-L-galactose dehydrogenase from Vibrio sp. (strain EJY3).